Here is a 585-residue protein sequence, read N- to C-terminus: Pyruvate kinase (585 aa).

Position 32 (R32) interacts with substrate. Residues N34, S36, D66, and T67 each coordinate K(+). 34–37 (NFSH) is a binding site for ATP. 2 residues coordinate ATP: R73 and K156. E221 serves as a coordination point for Mg(2+). Residues G244, D245, and T277 each contribute to the substrate site. Position 245 (D245) interacts with Mg(2+).

Belongs to the pyruvate kinase family. It in the C-terminal section; belongs to the PEP-utilizing enzyme family. Mg(2+) serves as cofactor. The cofactor is K(+).

It catalyses the reaction pyruvate + ATP = phosphoenolpyruvate + ADP + H(+). It participates in carbohydrate degradation; glycolysis; pyruvate from D-glyceraldehyde 3-phosphate: step 5/5. The protein is Pyruvate kinase (pyk) of Staphylococcus aureus (strain MRSA252).